Here is a 345-residue protein sequence, read N- to C-terminus: Biotin synthase (345 aa).

One can recognise a Radical SAM core domain in the interval 38–256 (RQVQVSTLLS…IAVARIMMPA (219 aa)). Residues cysteine 53, cysteine 57, and cysteine 60 each contribute to the [4Fe-4S] cluster site. The [2Fe-2S] cluster site is built by cysteine 97, cysteine 128, cysteine 188, and arginine 260.

The protein belongs to the radical SAM superfamily. Biotin synthase family. As to quaternary structure, homodimer. [4Fe-4S] cluster is required as a cofactor. It depends on [2Fe-2S] cluster as a cofactor.

It catalyses the reaction (4R,5S)-dethiobiotin + (sulfur carrier)-SH + 2 reduced [2Fe-2S]-[ferredoxin] + 2 S-adenosyl-L-methionine = (sulfur carrier)-H + biotin + 2 5'-deoxyadenosine + 2 L-methionine + 2 oxidized [2Fe-2S]-[ferredoxin]. The protein operates within cofactor biosynthesis; biotin biosynthesis; biotin from 7,8-diaminononanoate: step 2/2. Its function is as follows. Catalyzes the conversion of dethiobiotin (DTB) to biotin by the insertion of a sulfur atom into dethiobiotin via a radical-based mechanism. The polypeptide is Biotin synthase (Pectobacterium atrosepticum (strain SCRI 1043 / ATCC BAA-672) (Erwinia carotovora subsp. atroseptica)).